The sequence spans 117 residues: Large ribosomal subunit protein bL17 (117 aa).

This sequence belongs to the bacterial ribosomal protein bL17 family. In terms of assembly, part of the 50S ribosomal subunit. Contacts protein L32.

The sequence is that of Large ribosomal subunit protein bL17 from Campylobacter jejuni subsp. doylei (strain ATCC BAA-1458 / RM4099 / 269.97).